Consider the following 385-residue polypeptide: GPN-loop GTPase 1 (385 aa).

Position 13 to 18 (13 to 18) interacts with GTP; it reads GSGKTT. The Gly-Pro-Asn (GPN)-loop; involved in dimer interface signature appears at 70–72; it reads GPN. 173–176 is a GTP binding site; the sequence is NKTD. A phosphoserine mark is found at serine 304, serine 308, and serine 313. The segment covering 317–332 has biased composition (acidic residues); sequence EDANDGLVDRDEDEGV. A disordered region spans residues 317–356; sequence EDANDGLVDRDEDEGVEREYTFPGEERTKGEVNENSAPDL. The span at 333-348 shows a compositional bias: basic and acidic residues; the sequence is EREYTFPGEERTKGEV. Phosphoserine is present on serine 352. A Glycyl lysine isopeptide (Lys-Gly) (interchain with G-Cter in ubiquitin) cross-link involves residue lysine 369.

The protein belongs to the GPN-loop GTPase family. As to quaternary structure, heterodimers with GPN2 or GPN3. Binds to RNA polymerase II (RNAPII) in a GTP-dependent manner. Interacts with nuclear pore protein NUP133 and nuclear export factor CRM1. Interacts with PCL1. Post-translationally, phosphorylated by the cyclin-CDK PCL1-PHO85.

The protein localises to the cytoplasm. Functionally, small GTPase required for proper nuclear import of RNA polymerase II (RNAPII). May act at an RNAP assembly step prior to nuclear import. Promotes sister chromatid separation during anaphase. The sequence is that of GPN-loop GTPase 1 from Saccharomyces cerevisiae (strain ATCC 204508 / S288c) (Baker's yeast).